Consider the following 166-residue polypeptide: NAD(P)H-quinone oxidoreductase subunit I, chloroplastic (166 aa).

4Fe-4S ferredoxin-type domains lie at 55–84 (GRIH…VDWK) and 95–124 (LNYS…MTEE). [4Fe-4S] cluster is bound by residues Cys-64, Cys-67, Cys-70, Cys-74, Cys-104, Cys-107, Cys-110, and Cys-114.

It belongs to the complex I 23 kDa subunit family. As to quaternary structure, NDH is composed of at least 16 different subunits, 5 of which are encoded in the nucleus. It depends on [4Fe-4S] cluster as a cofactor.

It localises to the plastid. The protein resides in the chloroplast thylakoid membrane. It catalyses the reaction a plastoquinone + NADH + (n+1) H(+)(in) = a plastoquinol + NAD(+) + n H(+)(out). The catalysed reaction is a plastoquinone + NADPH + (n+1) H(+)(in) = a plastoquinol + NADP(+) + n H(+)(out). Its function is as follows. NDH shuttles electrons from NAD(P)H:plastoquinone, via FMN and iron-sulfur (Fe-S) centers, to quinones in the photosynthetic chain and possibly in a chloroplast respiratory chain. The immediate electron acceptor for the enzyme in this species is believed to be plastoquinone. Couples the redox reaction to proton translocation, and thus conserves the redox energy in a proton gradient. The chain is NAD(P)H-quinone oxidoreductase subunit I, chloroplastic from Lactuca sativa (Garden lettuce).